Consider the following 175-residue polypeptide: Dual-action ribosomal maturation protein DarP (175 aa).

Belongs to the DarP family.

It is found in the cytoplasm. Functionally, member of a network of 50S ribosomal subunit biogenesis factors which assembles along the 30S-50S interface, preventing incorrect 23S rRNA structures from forming. Promotes peptidyl transferase center (PTC) maturation. This is Dual-action ribosomal maturation protein DarP from Vibrio parahaemolyticus serotype O3:K6 (strain RIMD 2210633).